A 66-amino-acid polypeptide reads, in one-letter code: Large ribosomal subunit protein bL35 (66 aa).

The segment covering 1–26 (MPKMKTHRGSAKRFKKTASGKLKRGH) has biased composition (basic residues). Positions 1 to 29 (MPKMKTHRGSAKRFKKTASGKLKRGHAYT) are disordered.

Belongs to the bacterial ribosomal protein bL35 family.

This is Large ribosomal subunit protein bL35 from Geobacillus kaustophilus (strain HTA426).